A 126-amino-acid polypeptide reads, in one-letter code: RutC family protein y4sK (126 aa).

It belongs to the RutC family.

In Sinorhizobium fredii (strain NBRC 101917 / NGR234), this protein is RutC family protein y4sK.